We begin with the raw amino-acid sequence, 451 residues long: Phosphoglucosamine mutase (451 aa).

The active-site Phosphoserine intermediate is Ser-107. Ser-107, Asp-246, Asp-248, and Asp-250 together coordinate Mg(2+). Residue Ser-107 is modified to Phosphoserine.

Belongs to the phosphohexose mutase family. Mg(2+) serves as cofactor. Activated by phosphorylation.

The catalysed reaction is alpha-D-glucosamine 1-phosphate = D-glucosamine 6-phosphate. In terms of biological role, catalyzes the conversion of glucosamine-6-phosphate to glucosamine-1-phosphate. The protein is Phosphoglucosamine mutase of Burkholderia cenocepacia (strain HI2424).